A 483-amino-acid chain; its full sequence is uncharacterized protein (483 aa).

This is an uncharacterized protein from Acanthamoeba polyphaga mimivirus (APMV).